The following is a 192-amino-acid chain: Adenylate kinase (192 aa).

10–18 is a binding site for ATP; the sequence is GVPGVGGTT.

This sequence belongs to the archaeal adenylate kinase family. In terms of assembly, monomer.

Its subcellular location is the cytoplasm. It catalyses the reaction AMP + ATP = 2 ADP. This Methanotorris igneus (Methanococcus igneus) protein is Adenylate kinase (adkA).